A 178-amino-acid chain; its full sequence is Interleukin-10 (178 aa).

The signal sequence occupies residues 1–18 (MPGSALLCCLALLAGVKA). 2 cysteine pairs are disulfide-bonded: cysteine 30-cysteine 126 and cysteine 80-cysteine 132. An N-linked (GlcNAc...) asparagine glycan is attached at asparagine 67. N-linked (GlcNAc...) asparagine glycosylation is present at asparagine 134.

This sequence belongs to the IL-10 family. Homodimer. Interacts with IL10RA and IL10RB.

The protein localises to the secreted. Its function is as follows. Major immune regulatory cytokine that acts on many cells of the immune system where it has profound anti-inflammatory functions, limiting excessive tissue disruption caused by inflammation. Mechanistically, IL10 binds to its heterotetrameric receptor comprising IL10RA and IL10RB leading to JAK1 and STAT2-mediated phosphorylation of STAT3. In turn, STAT3 translocates to the nucleus where it drives expression of anti-inflammatory mediators. Targets antigen-presenting cells (APCs) such as macrophages and monocytes and inhibits their release of pro-inflammatory cytokines including granulocyte-macrophage colony-stimulating factor /GM-CSF, granulocyte colony-stimulating factor/G-CSF, IL-1 alpha, IL-1 beta, IL-6, IL-8 and TNF-alpha. Also interferes with antigen presentation by reducing the expression of MHC-class II and co-stimulatory molecules, thereby inhibiting their ability to induce T cell activation. In addition, controls the inflammatory response of macrophages by reprogramming essential metabolic pathways including mTOR signaling. The chain is Interleukin-10 (IL10) from Cavia porcellus (Guinea pig).